We begin with the raw amino-acid sequence, 138 residues long: Ribosome-binding factor A (138 aa).

It belongs to the RbfA family. As to quaternary structure, monomer. Binds 30S ribosomal subunits, but not 50S ribosomal subunits or 70S ribosomes.

It localises to the cytoplasm. In terms of biological role, one of several proteins that assist in the late maturation steps of the functional core of the 30S ribosomal subunit. Associates with free 30S ribosomal subunits (but not with 30S subunits that are part of 70S ribosomes or polysomes). Required for efficient processing of 16S rRNA. May interact with the 5'-terminal helix region of 16S rRNA. In Pseudoalteromonas atlantica (strain T6c / ATCC BAA-1087), this protein is Ribosome-binding factor A.